Here is a 188-residue protein sequence, read N- to C-terminus: Inner membrane-spanning protein YciB (188 aa).

The next 5 membrane-spanning stretches (helical) occupy residues 23-43, 49-69, 73-93, 116-133, and 149-169; these read FQKA…IGYA, AMLP…GLIF, VFVK…LVGG, WRTL…VAII, and FRLA…PFMM.

Belongs to the YciB family.

Its subcellular location is the cell inner membrane. Plays a role in cell envelope biogenesis, maintenance of cell envelope integrity and membrane homeostasis. This is Inner membrane-spanning protein YciB from Caulobacter vibrioides (strain ATCC 19089 / CIP 103742 / CB 15) (Caulobacter crescentus).